A 179-amino-acid chain; its full sequence is Auxin-responsive protein IAA15 (179 aa).

The EAR-like (transcriptional repression) signature appears at 21–25 (LTLAL). The 88-residue stretch at 86–173 (RKYVKVALDG…SCKRMRLMKT (88 aa)) folds into the PB1 domain.

Belongs to the Aux/IAA family. As to quaternary structure, homodimers and heterodimers.

It localises to the nucleus. In terms of biological role, aux/IAA proteins are short-lived transcriptional factors that function as repressors of early auxin response genes at low auxin concentrations. Repression is thought to result from the interaction with auxin response factors (ARFs), proteins that bind to the auxin-responsive promoter element (AuxRE). Formation of heterodimers with ARF proteins may alter their ability to modulate early auxin response genes expression. This chain is Auxin-responsive protein IAA15 (IAA15), found in Arabidopsis thaliana (Mouse-ear cress).